Reading from the N-terminus, the 180-residue chain is Peptide deformylase (180 aa).

The Fe cation site is built by Cys96 and His138. The active site involves Glu139. His142 serves as a coordination point for Fe cation.

This sequence belongs to the polypeptide deformylase family. Fe(2+) is required as a cofactor.

It catalyses the reaction N-terminal N-formyl-L-methionyl-[peptide] + H2O = N-terminal L-methionyl-[peptide] + formate. In terms of biological role, removes the formyl group from the N-terminal Met of newly synthesized proteins. Requires at least a dipeptide for an efficient rate of reaction. N-terminal L-methionine is a prerequisite for activity but the enzyme has broad specificity at other positions. The chain is Peptide deformylase from Rhodopseudomonas palustris (strain BisA53).